A 59-amino-acid polypeptide reads, in one-letter code: Cortexin domain-containing 1 protein (59 aa).

Residues 17–37 (LTLACFVFLCLFLVVMIIRCA) traverse the membrane as a helical segment.

The protein resides in the membrane. In Homo sapiens (Human), this protein is Cortexin domain-containing 1 protein.